We begin with the raw amino-acid sequence, 201 residues long: IDLSRF-like peptide (201 aa).

The N-terminal stretch at 1–28 is a signal peptide; that stretch reads MVRRFCNGAVALGIALTACAAFPRAIMA. Positions 43 to 201 are excised as a propeptide; the sequence is SDACHPYEPF…EKLVKTGFLD (159 aa). The region spanning 45-85 is the LDL-receptor class A domain; it reads ACHPYEPFKCPGDGLCISIQYLCDGAPDCQDGYDEDSRLCT. Cystine bridges form between cysteine 46–cysteine 60, cysteine 54–cysteine 73, and cysteine 67–cysteine 84.

As to expression, expressed in central brain, antennal and optical lobes, in gnathal, thoracic and abdominal ganglia and in the retrocerebral complex (at protein level).

Its subcellular location is the secreted. The protein is IDLSRF-like peptide of Camponotus floridanus (Florida carpenter ant).